The sequence spans 384 residues: Eukaryotic translation initiation factor 3 subunit M (384 aa).

The 163-residue stretch at 184–346 (ENRKAIEAMI…KKILITGAFP (163 aa)) folds into the PCI domain.

Belongs to the eIF-3 subunit M family. Component of the eukaryotic translation initiation factor 3 (eIF-3) complex.

It is found in the cytoplasm. In terms of biological role, component of the eukaryotic translation initiation factor 3 (eIF-3) complex, which is involved in protein synthesis of a specialized repertoire of mRNAs and, together with other initiation factors, stimulates binding of mRNA and methionyl-tRNAi to the 40S ribosome. The eIF-3 complex specifically targets and initiates translation of a subset of mRNAs involved in cell proliferation. The protein is Eukaryotic translation initiation factor 3 subunit M of Schistosoma japonicum (Blood fluke).